Consider the following 343-residue polypeptide: Heat-inducible transcription repressor HrcA (343 aa).

This sequence belongs to the HrcA family.

Its function is as follows. Negative regulator of class I heat shock genes (grpE-dnaK-dnaJ and groELS operons). Prevents heat-shock induction of these operons. The chain is Heat-inducible transcription repressor HrcA from Alkaliphilus metalliredigens (strain QYMF).